We begin with the raw amino-acid sequence, 110 residues long: Large ribosomal subunit protein uL22 (110 aa).

Belongs to the universal ribosomal protein uL22 family. As to quaternary structure, part of the 50S ribosomal subunit.

Its function is as follows. This protein binds specifically to 23S rRNA; its binding is stimulated by other ribosomal proteins, e.g. L4, L17, and L20. It is important during the early stages of 50S assembly. It makes multiple contacts with different domains of the 23S rRNA in the assembled 50S subunit and ribosome. Functionally, the globular domain of the protein is located near the polypeptide exit tunnel on the outside of the subunit, while an extended beta-hairpin is found that lines the wall of the exit tunnel in the center of the 70S ribosome. This is Large ribosomal subunit protein uL22 from Hahella chejuensis (strain KCTC 2396).